The sequence spans 352 residues: Uroporphyrinogen decarboxylase (352 aa).

Substrate-binding positions include 26–30 (RQAGR), F45, D76, Y153, S208, and H323.

This sequence belongs to the uroporphyrinogen decarboxylase family. In terms of assembly, homodimer.

The protein localises to the cytoplasm. The catalysed reaction is uroporphyrinogen III + 4 H(+) = coproporphyrinogen III + 4 CO2. Its pathway is porphyrin-containing compound metabolism; protoporphyrin-IX biosynthesis; coproporphyrinogen-III from 5-aminolevulinate: step 4/4. Functionally, catalyzes the decarboxylation of four acetate groups of uroporphyrinogen-III to yield coproporphyrinogen-III. The protein is Uroporphyrinogen decarboxylase of Parasynechococcus marenigrum (strain WH8102).